The primary structure comprises 348 residues: Chemokine C-C motif receptor-like 2 (348 aa).

Residues 1–43 (MANYTPAPEDDYDVFIEDDLSDDEIEPCTPYDPKILSAQLVPY) lie on the Extracellular side of the membrane. A helical membrane pass occupies residues 44 to 64 (LYTTVFMVGLLDNILVVFILV). The Cytoplasmic segment spans residues 65–76 (KYKGLRQAENMS). The helical transmembrane segment at 77 to 97 (FLNLALSNLGFLLTLPFWAYA) threads the bilayer. Over 98-110 (ASHGEGFDDPLCK) the chain is Extracellular. Cys-109 and Cys-187 are disulfide-bonded. The chain crosses the membrane as a helical span at residues 111–131 (ILLLLYSIGLYSEAFFNVLLT). Over 132-150 (VQRYKEFFHVRRRFSACRT) the chain is Cytoplasmic. The chain crosses the membrane as a helical span at residues 151–171 (VAGSIFISVLVWVTATLVTLP). Residues 172–204 (ELVSYKPQMQSQKYKCFFTGLHFLPADETFWKH) lie on the Extracellular side of the membrane. Residues 205 to 225 (FLTLKMNILGFLLPLFAFVYC) form a helical membrane-spanning segment. Residues 226-244 (YVRMRKTLQFRERNYGLFK) lie on the Cytoplasmic side of the membrane. A helical membrane pass occupies residues 245–265 (LVFTIMAVFLLMWGPYNIVLF). Over 266 to 292 (LSAFNEHFSLHGCGSSYNLNKSVQITR) the chain is Extracellular. The N-linked (GlcNAc...) asparagine glycan is linked to Asn-285. A helical membrane pass occupies residues 293-313 (IIAATHCCVNPLLYVFLDKAF). Topologically, residues 314–348 (RKHLCHLFYLCSDTAPQPTEEPAQGASGEEYHLSS) are cytoplasmic.

Belongs to the G-protein coupled receptor 1 family.

The protein resides in the cell membrane. Receptor for CCL19 and chemerin/RARRES2. Does not appear to be a signaling receptor, but may have a role in modulating chemokine-triggered immune responses by capturing and internalizing CCL19 or by presenting RARRES2 ligand to CMKLR1, a functional signaling receptor. Plays a critical role for the development of Th2 responses. The protein is Chemokine C-C motif receptor-like 2 (CCRL2) of Bos taurus (Bovine).